Here is a 262-residue protein sequence, read N- to C-terminus: Apolipoprotein A-I-1 (262 aa).

Residues 1 to 18 (MKFLALALTILLAAGTQA) form the signal peptide. Residues 32–63 (VKAALSMYIAQVKLTAQRSIDLLDDTEYKEYK) are 3 X approximate tandem repeats. 2 tandem repeats follow at residues 64-85 (MQLT…QSLA) and 87-107 (YSEA…AEVM). The 10 X approximate tandem repeats stretch occupies residues 64–262 (MQLTQSLDNL…YETISQAMKA (199 aa)). The 3; half-length repeat unit spans residues 108-118 (KDVEELRSQLE). 5 consecutive repeat copies span residues 119–140 (PKRA…KKLE), 141–162 (PLIK…AKME), 163–184 (PIVE…TKLM), 185–206 (PIVE…TLAA), and 207–228 (PYAE…EKVS). The stretch at 229-239 (PLSEDFKGQVG) is one 9; half-length repeat. Copy 10 of the repeat occupies 240-262 (PAAEQAKQKLLAFYETISQAMKA).

The protein belongs to the apolipoprotein A1/A4/E family.

The protein localises to the secreted. In terms of biological role, participates in the reverse transport of cholesterol from tissues to the liver for excretion by promoting cholesterol efflux from tissues and by acting as a cofactor for the lecithin cholesterol acyltransferase (LCAT). This Oncorhynchus mykiss (Rainbow trout) protein is Apolipoprotein A-I-1.